Consider the following 227-residue polypeptide: uncharacterized protein (227 aa).

An RCK N-terminal domain is found at 3–119 (RADFCIIGLG…STMGIREALI (117 aa)). The 88-residue stretch at 134 to 221 (HGLENEIINL…LNKYLNYINP (88 aa)) folds into the RCK C-terminal domain.

This is an uncharacterized protein from Mycoplasma genitalium (strain ATCC 33530 / DSM 19775 / NCTC 10195 / G37) (Mycoplasmoides genitalium).